We begin with the raw amino-acid sequence, 65 residues long: Temporin-SN1 (65 aa).

An N-terminal signal peptide occupies residues 1 to 22 (MFTTKKSLLLLFFLGTINLSLC). The propeptide at 23–44 (QEERNAEEERRDGDDEGGVEVQ) is removed in mature form. The residue at position 65 (lysine 65) is a Lysine amide.

It belongs to the frog skin active peptide (FSAP) family. Temporin subfamily. Expressed by the skin glands.

Its subcellular location is the secreted. Its function is as follows. Antimicrobial peptide. Active against a variety of Gram-positive bacterial strains. Not active against Gram-negative bacteria and against fungi. Shows hemolytic activity against human erythrocytes. The polypeptide is Temporin-SN1 (Sylvirana spinulosa (Fine-spined frog)).